Here is a 400-residue protein sequence, read N- to C-terminus: Nicotinate phosphoribosyltransferase (400 aa).

His-220 bears the Phosphohistidine; by autocatalysis mark.

This sequence belongs to the NAPRTase family. Transiently phosphorylated on a His residue during the reaction cycle. Phosphorylation strongly increases the affinity for substrates and increases the rate of nicotinate D-ribonucleotide production. Dephosphorylation regenerates the low-affinity form of the enzyme, leading to product release.

It catalyses the reaction nicotinate + 5-phospho-alpha-D-ribose 1-diphosphate + ATP + H2O = nicotinate beta-D-ribonucleotide + ADP + phosphate + diphosphate. It functions in the pathway cofactor biosynthesis; NAD(+) biosynthesis; nicotinate D-ribonucleotide from nicotinate: step 1/1. Catalyzes the synthesis of beta-nicotinate D-ribonucleotide from nicotinate and 5-phospho-D-ribose 1-phosphate at the expense of ATP. The polypeptide is Nicotinate phosphoribosyltransferase (Salmonella choleraesuis (strain SC-B67)).